The chain runs to 439 residues: Glutamate--tRNA ligase 1 (439 aa).

A 'HIGH' region motif is present at residues 6 to 16 (PSPTGDMHIGN). Residues 232–236 (KMSKR) carry the 'KMSKS' region motif. Residue Lys-235 participates in ATP binding.

This sequence belongs to the class-I aminoacyl-tRNA synthetase family. Glutamate--tRNA ligase type 1 subfamily. As to quaternary structure, monomer.

It localises to the cytoplasm. It carries out the reaction tRNA(Glu) + L-glutamate + ATP = L-glutamyl-tRNA(Glu) + AMP + diphosphate. Its function is as follows. Catalyzes the attachment of glutamate to tRNA(Glu) in a two-step reaction: glutamate is first activated by ATP to form Glu-AMP and then transferred to the acceptor end of tRNA(Glu). This chain is Glutamate--tRNA ligase 1, found in Helicobacter acinonychis (strain Sheeba).